We begin with the raw amino-acid sequence, 338 residues long: Heat-inducible transcription repressor HrcA (338 aa).

The protein belongs to the HrcA family.

Functionally, negative regulator of class I heat shock genes (grpE-dnaK-dnaJ and groELS operons). Prevents heat-shock induction of these operons. The sequence is that of Heat-inducible transcription repressor HrcA from Bacillus cereus (strain AH187).